Consider the following 66-residue polypeptide: MNAHVLLLCTILFLLVHTPPVLGGMKEKCVTMGGYCRKQCRVQDALSGYCRNENPCCVRRVLMEDG.

Residues 1-23 (MNAHVLLLCTILFLLVHTPPVLG) form the signal peptide. Disulfide bonds link C29-C56, C36-C50, and C40-C57. Residues 61 to 66 (VLMEDG) constitute a propeptide that is removed on maturation.

The protein belongs to the beta-defensin family. As to expression, expressed at low levels in kidney, lung, and spleen.

It localises to the secreted. In terms of biological role, has bactericidal activity. May act as a ligand for C-C chemokine receptor CCR6. Positively regulates the sperm motility and bactericidal activity in a CCR6-dependent manner. Binds to CCR6 and triggers Ca2+ mobilization in the sperm which is important for its motility. This is Defensin-B1 from Ornithorhynchus anatinus (Duckbill platypus).